Reading from the N-terminus, the 129-residue chain is Cocaine- and amphetamine-regulated transcript protein (129 aa).

A signal peptide spans 1–27; sequence MESSRLRLLPVLGAALLLLLPLLGAGA. Tyr-41 carries the post-translational modification Phosphotyrosine. Residue Ser-48 is modified to Phosphoserine. 3 disulfide bridges follow: Cys-95–Cys-113, Cys-101–Cys-121, and Cys-115–Cys-128.

It belongs to the CART family. Neuroendocrine tissues. Predominantly expressed in the hypothalamus, pituitary, and longitudinal muscle-myenteric plexus. Abundant expression is also seen in the midbrain/thalamus and eye. A lower level expression is seen in the other brain regions and adrenal.

The protein localises to the secreted. Its function is as follows. Satiety factor closely associated with the actions of leptin and neuropeptide y; this anorectic peptide inhibits both normal and starvation-induced feeding and completely blocks the feeding response induced by neuropeptide Y and regulated by leptin in the hypothalamus. This Rattus norvegicus (Rat) protein is Cocaine- and amphetamine-regulated transcript protein (Cartpt).